Reading from the N-terminus, the 669-residue chain is UvrABC system protein B (669 aa).

In terms of domain architecture, Helicase ATP-binding spans 26-183 (TNFHAGIAKQ…RHLTELQYTR (158 aa)). 39-46 (GVTGSGKT) is a binding site for ATP. Positions 92-115 (YYDYYQPEAYVPASDTFIEKDSSI) match the Beta-hairpin motif. The region spanning 431–597 (QVDDLISQIN…SVVRPISDIL (167 aa)) is the Helicase C-terminal domain. Positions 631–666 (AAQMKMLEQQMYQHARDLEFEDAARIRDQIQRLREA) constitute a UVR domain.

This sequence belongs to the UvrB family. Forms a heterotetramer with UvrA during the search for lesions. Interacts with UvrC in an incision complex.

The protein localises to the cytoplasm. Functionally, the UvrABC repair system catalyzes the recognition and processing of DNA lesions. A damage recognition complex composed of 2 UvrA and 2 UvrB subunits scans DNA for abnormalities. Upon binding of the UvrA(2)B(2) complex to a putative damaged site, the DNA wraps around one UvrB monomer. DNA wrap is dependent on ATP binding by UvrB and probably causes local melting of the DNA helix, facilitating insertion of UvrB beta-hairpin between the DNA strands. Then UvrB probes one DNA strand for the presence of a lesion. If a lesion is found the UvrA subunits dissociate and the UvrB-DNA preincision complex is formed. This complex is subsequently bound by UvrC and the second UvrB is released. If no lesion is found, the DNA wraps around the other UvrB subunit that will check the other stand for damage. This Xylella fastidiosa (strain M12) protein is UvrABC system protein B.